The following is an 89-amino-acid chain: MKKGIHPEYRPVVFRDAGADFAFLTRSTVETNKTIEWEDGNTYPLVELDISSASHPFYTGRQRIVDTGGRVQRFESRRRRRQQQSGEQG.

A disordered region spans residues 70–89 (RVQRFESRRRRRQQQSGEQG).

Belongs to the bacterial ribosomal protein bL31 family. Type B subfamily. As to quaternary structure, part of the 50S ribosomal subunit.

This Rubrobacter xylanophilus (strain DSM 9941 / JCM 11954 / NBRC 16129 / PRD-1) protein is Large ribosomal subunit protein bL31B.